Here is a 335-residue protein sequence, read N- to C-terminus: Fructose-1,6-bisphosphatase class 1 1 (335 aa).

Mg(2+)-binding residues include glutamate 92, aspartate 114, leucine 116, and aspartate 117. Substrate contacts are provided by residues 117–120 (DGSS), asparagine 209, and lysine 275. Glutamate 281 provides a ligand contact to Mg(2+).

This sequence belongs to the FBPase class 1 family. In terms of assembly, homotetramer. The cofactor is Mg(2+).

The protein localises to the cytoplasm. It carries out the reaction beta-D-fructose 1,6-bisphosphate + H2O = beta-D-fructose 6-phosphate + phosphate. Its pathway is carbohydrate biosynthesis; gluconeogenesis. This is Fructose-1,6-bisphosphatase class 1 1 from Polaromonas naphthalenivorans (strain CJ2).